Here is a 379-residue protein sequence, read N- to C-terminus: uncharacterized protein (379 aa).

Belongs to the glycosyltransferase 28 family.

This is an uncharacterized protein from Methanosarcina mazei (strain ATCC BAA-159 / DSM 3647 / Goe1 / Go1 / JCM 11833 / OCM 88) (Methanosarcina frisia).